Reading from the N-terminus, the 390-residue chain is 1-deoxy-D-xylulose 5-phosphate reductoisomerase (390 aa).

T10, G11, S12, I13, G36, N38, and N124 together coordinate NADPH. K125 contributes to the 1-deoxy-D-xylulose 5-phosphate binding site. E126 provides a ligand contact to NADPH. Residue D150 coordinates Mn(2+). Positions 151, 152, 176, and 199 each coordinate 1-deoxy-D-xylulose 5-phosphate. E152 provides a ligand contact to Mn(2+). G205 is a binding site for NADPH. 1-deoxy-D-xylulose 5-phosphate contacts are provided by S212, N217, K218, and E221. E221 lines the Mn(2+) pocket.

The protein belongs to the DXR family. Mg(2+) is required as a cofactor. The cofactor is Mn(2+).

The catalysed reaction is 2-C-methyl-D-erythritol 4-phosphate + NADP(+) = 1-deoxy-D-xylulose 5-phosphate + NADPH + H(+). The protein operates within isoprenoid biosynthesis; isopentenyl diphosphate biosynthesis via DXP pathway; isopentenyl diphosphate from 1-deoxy-D-xylulose 5-phosphate: step 1/6. Its function is as follows. Catalyzes the NADPH-dependent rearrangement and reduction of 1-deoxy-D-xylulose-5-phosphate (DXP) to 2-C-methyl-D-erythritol 4-phosphate (MEP). This is 1-deoxy-D-xylulose 5-phosphate reductoisomerase from Microcystis aeruginosa (strain NIES-843 / IAM M-2473).